The chain runs to 442 residues: Cyclic AMP receptor-like protein B (442 aa).

Topologically, residues 1 to 16 (MGGDIHLCSMILGKNH) are extracellular. The helical transmembrane segment at 17 to 37 (LIFLYFANLFGSTLSFLATII) threads the bilayer. Over 38 to 219 (TIVFYLVKKY…PKKIDTLIFY (182 aa)) the chain is Cytoplasmic. Positions 83-166 (YSSTPISIQN…LSSSDKNNTI (84 aa)) are disordered. A compositionally biased stretch (low complexity) spans 91 to 103 (QNNNNKNNNLPKQ). Positions 112-122 (INKNHNNYCNY) are enriched in polar residues. A compositionally biased stretch (low complexity) spans 123–144 (STSATSSSSSSSSFSSTNSGSS). The span at 145–166 (YEYQQPQKNQQTLSSSDKNNTI) shows a compositional bias: polar residues. Residues 220-240 (LSISDFIAVSGIIIEQLIIIF) form a helical membrane-spanning segment. Topologically, residues 241–255 (NKEISKSIGFCIGER) are extracellular. A helical membrane pass occupies residues 256 to 276 (VSIHFGLLATLFWSNCIAYYL). Residues 277 to 289 (LRETYELKPYNIR) are Cytoplasmic-facing. The chain crosses the membrane as a helical span at residues 290–310 (FVYFHIVCWGMALIGVASLFF). The Extracellular portion of the chain corresponds to 311–334 (SKIITVSNIDQGGSWCSVSSSYQL). Residues 335 to 355 (YFWVIPLFVSFTWNLICYCLI) traverse the membrane as a helical segment. The Cytoplasmic segment spans residues 356 to 382 (YRKFNKIIGIYGIQSVQIKTIIIRKLS). Residues 383–403 (FYLLAFLITWVWDVINNSIFL) form a helical membrane-spanning segment. The Extracellular portion of the chain corresponds to 404 to 410 (YEGKCPP). The chain crosses the membrane as a helical span at residues 411 to 431 (FALWILQEFFSSGYGFFNSLA). Topologically, residues 432–442 (YAVTTRFYSRK) are cytoplasmic.

It belongs to the G-protein coupled receptor 5 family.

The protein localises to the membrane. In terms of biological role, receptor for cAMP. This Dictyostelium discoideum (Social amoeba) protein is Cyclic AMP receptor-like protein B (crlB).